The chain runs to 151 residues: Homeobox protein HD-1 (151 aa).

A DNA-binding region (homeobox) is located at residues glutamate 87 to glutamate 146.

The protein resides in the nucleus. The polypeptide is Homeobox protein HD-1 (HD-1) (Encephalitozoon cuniculi (strain GB-M1) (Microsporidian parasite)).